We begin with the raw amino-acid sequence, 630 residues long: Neuronal acetylcholine receptor subunit alpha-4 (630 aa).

The first 30 residues, 1-30 (MANSGTGAPPPLLLLPLLLLLGTGLLPASS), serve as a signal peptide directing secretion. Over 32-249 (IETRAHAEER…IIRRLPLFYT (218 aa)) the chain is Extracellular. A glycan (N-linked (GlcNAc...) asparagine) is linked at N59. Positions 78 and 80 each coordinate Ca(2+). 2 N-linked (GlcNAc...) asparagine glycosylation sites follow: N109 and N176. 2 disulfides stabilise this stretch: C163-C177 and C227-C228. Residues 250–270 (INLIIPCLLISCLTVLVFYLP) form a helical membrane-spanning segment. C273 is lipidated: S-palmitoyl cysteine. Transmembrane regions (helical) follow at residues 279 to 299 (LCIS…EIIP) and 313 to 333 (LLFT…VLNV). The Cytoplasmic segment spans residues 334-604 (HHRSPRTHTM…WKYVAMVIDR (271 aa)). 2 disordered regions span residues 418–463 (TAVE…SGAP) and 505–526 (SLAD…SQLP). Phosphoserine is present on S428. Residues 434 to 443 (PDLKTSEVEK) are compositionally biased toward basic and acidic residues. Residues 447 to 457 (CPSPGSCPPPK) are compositionally biased toward pro residues. Phosphoserine is present on residues S542 and S545. Residues 605-625 (IFLWMFIIVCLLGTVGLFLPP) traverse the membrane as a helical segment.

The protein belongs to the ligand-gated ion channel (TC 1.A.9) family. Acetylcholine receptor (TC 1.A.9.1) subfamily. Alpha-4/CHRNA4 sub-subfamily. Neuronal AChR is composed of two different types of subunits: alpha and beta. CHRNA4 forms heteropentameric neuronal acetylcholine receptors with CHRNB2 and CHRNB4, as well as CHRNA5 and CHRNB3 as accesory subunits. Found in two major stoichiometric forms, LS (low agonist sensitivity): (CHRNA4)3:(CHRNB2)2 and HS (high agonist sensitivity): (CHRNA4)2:(CHRNB2)3, the two stoichiometric forms differ in their unitary conductance, calcium permeability, ACh sensitivity and potentiation by divalent cation. Cells produce predominantly an (CHRNA4)3:(CHRNB2)2 nAChR. The (CHRNA4)2:(CHRNB2)3 expression is selectively up-regulated by nicotine and has lower single channel conductance and calcium permeability. In the striatum, also forms CHRNA4:CHRNA6:CHRNB2 complexes. Also found in the stoichiometric form: (CHRNA4:CHRNB2)2:CHRNB3. Interacts with RIC3; which is required for proper folding and assembly. Interacts with LYPD6. In terms of tissue distribution, in various regions of the central nervous system. Expressed in hippocampal neurons.

The protein localises to the presynaptic cell membrane. It localises to the cell membrane. It carries out the reaction Ca(2+)(in) = Ca(2+)(out). The enzyme catalyses K(+)(in) = K(+)(out). The catalysed reaction is Na(+)(in) = Na(+)(out). With respect to regulation, activated by a myriad of ligands such as acetylcholine, cytisine, nicotine, choline and epibatidine. Channel potentiation by calcium is stoichiometry-selective, CHRNA4:CHRNB2 nACh receptor is achieved by calcium association with topographically distinct sites framed by anionic residues within the CHRNA4 subunit and between the CHRNA4 and CHRNB2 subunits. nAChR activity is inhibited by the antagonist alpha-conotoxins BuIA, PnIA, GID and MII, small disulfide-constrained peptides from cone snails. In terms of biological role, component of neuronal acetylcholine receptors (nAChRs) that function as pentameric, ligand-gated cation channels with high calcium permeability among other activities. nAChRs are excitatory neurotrasnmitter receptors formed by a collection of nAChR subunits known to mediate synaptic transmission in the nervous system and the neuromuscular junction. Each nAchR subunit confers differential attributes to channel properties, including activation, deactivation and desensitization kinetics, pH sensitivity, cation permeability, and binding to allosteric modulators. CHRNA4 forms heteropentameric neuronal acetylcholine receptors with CHRNB2 and CHRNB4, as well as CHRNA5 and CHRNB3 as accesory subunits. Is the most abundant nAChR subtype expressed in the central nervous system. Found in two major stoichiometric forms,(CHRNA4)3:(CHRNB2)2 and (CHRNA4)2:(CHRNB2)3, the two stoichiometric forms differ in their unitary conductance, calcium permeability, ACh sensitivity and potentiation by divalent cation. Involved in the modulation of calcium-dependent signaling pathways, influences the release of neurotransmitters, including dopamine, glutamate and GABA. In Rattus norvegicus (Rat), this protein is Neuronal acetylcholine receptor subunit alpha-4 (Chrna4).